The following is a 165-amino-acid chain: Transcription factor E (165 aa).

An HTH TFE/IIEalpha-type domain is found at 5–87 (NDPVVRGYLL…LWQLDLSDIE (83 aa)).

It belongs to the TFE family. Monomer. Interaction with RNA polymerase subunits RpoF and RpoE is necessary for Tfe stimulatory transcription activity. Able to interact with Tbp and RNA polymerase in the absence of DNA promoter. Interacts both with the preinitiation and elongation complexes.

Functionally, transcription factor that plays a role in the activation of archaeal genes transcribed by RNA polymerase. Facilitates transcription initiation by enhancing TATA-box recognition by TATA-box-binding protein (Tbp), and transcription factor B (Tfb) and RNA polymerase recruitment. Not absolutely required for transcription in vitro, but particularly important in cases where Tbp or Tfb function is not optimal. It dynamically alters the nucleic acid-binding properties of RNA polymerases by stabilizing the initiation complex and destabilizing elongation complexes. Seems to translocate with the RNA polymerase following initiation and acts by binding to the non template strand of the transcription bubble in elongation complexes. The polypeptide is Transcription factor E (Methanococcoides burtonii (strain DSM 6242 / NBRC 107633 / OCM 468 / ACE-M)).